Consider the following 157-residue polypeptide: ABA-responsive protein ABR17 (157 aa).

Belongs to the BetVI family.

In Pisum sativum (Garden pea), this protein is ABA-responsive protein ABR17.